A 421-amino-acid chain; its full sequence is F-box only protein 5 (421 aa).

The residue at position 85 (serine 85) is a Phosphoserine. An interaction with EVI5 region spans residues 114-219; it reads ELEASRLYED…IGKKMGLEHL (106 aa). In terms of domain architecture, F-box spans 223 to 273; that stretch reads AELSRRGFVHLLANILTKLSGMDLVNLSKVSRIWKKILENNKGAFQLYSKT. A sufficient for interaction with RPS6KA2; Prevents association of CDC20 with RPS6KA2 region spans residues 236-313; it reads NILTKLSGMD…KSSTWAPPKK (78 aa). A requires for efficient binding to CDC20 region spans residues 236-383; the sequence is NILTKLSGMD…SCQFEYCTKC (148 aa). The tract at residues 280–421 is inhibits APC ubiquitin ligase activity; it reads SSKLSLHATT…KKSKKNLQRL (142 aa). The interval 296–299 is competitively blocks access of APC substrates to the D-box coreceptor formed by FZR1 and ANAPC10; the sequence is RAAL. The ZBR-type zinc finger occupies 348-396; it reads SLKACVRCNFPAKYDHYLERAVCKRESCQFEYCTKCLCAYHNNKDCLNG. Residues cysteine 352, cysteine 355, cysteine 370, cysteine 375, cysteine 380, cysteine 383, histidine 388, and cysteine 393 each contribute to the Zn(2+) site. The allows a rapid multiple mono-ubiquitination of the APC substrate, but strongly inhibits the slow ubiquitin chain elongation catalyzed by UBCH10 stretch occupies residues 352 to 394; the sequence is CVRCNFPAKYDHYLERAVCKRESCQFEYCTKCLCAYHNNKDCL. A sufficient to suppress UBE2S activity; essential for interaction with UBE2S; competitively inhibits the rapide ubiquitin chain elongation by UBE2D1 which blocks UBE2D1 with APC; indispensable for recruitment and position of FBXO5 to the catalytic site of APC; abrogates the inhibition of ubiquitin chain assembly primarily catalyzed by UBE2S; inhibits the ubiquitination by either UBE2C or UBE2D1 region spans residues 411 to 421; it reads TKKSKKNLQRL.

Part of a SCF (SKP1-cullin-F-box) protein ligase complex. Interacts with BTRC; mediates proteolysis by the SCF ubiquitin ligase complex leading to activation of APC in late mitosis and subsequent mitotic progression. Interacts with FZR1/CDH1 and the N-terminal substrate-binding domain of CDC20; prevents APC activation. Also interacts with EVI5 which blocks its phosphorylation by PLK1 and prevents its subsequent binding to BTRC and degradation. Interacts simultaneously with anaphase promoting complex (APC), through at least ANAPC2, CDC23, CDC27, the APC substrate GMNN and the APC activator FZR1. Interacts with UBE2S; interferes with the activity of UBE2S mainly by disrupting the dynamic electrostatic association between the C-terminal tail of UBE2S and ANAPC2. Interacts with RPS6KA2; cooperates to induce the metaphase arrest of early blastomeres; increases and stabilizes interaction of FBXO5 with CDC20. Post-translationally, phosphorylation by CDK2 and subsequently by PLK1 triggers degradation during early mitosis through ubiquitin-mediated proteolysis by the SCF ubiquitin ligase complex containing the F-box protein BTRC. This degradation is necessary for the activation of APC in late mitosis and subsequent mitotic progression. Phosphorylated by RPS6KA2; increases and stabilizes interaction with CDC20. In terms of processing, ubiquitinated by the SCF(BTRC) complex following phosphorylation by PLK1. Undergoes both 'Lys-11' and 'Lys-48'-linked polyubiquitination by APC-FZR1 complex leading to degradation during G1 phase by the proteasome. Degraded through the SCF(BTRC) complex; degradation occurs during oocyte maturation, between germinal vesicle breakdown (GVBD) and meiosis I, and is required for the meiosis I-meiosis II transition. As to expression, expressed in oocytes and granulosa cells. Expressed in proliferating cells compartments in hair follicle and skin epidermis, spermatogonia, and intestinal crypts.

The protein resides in the nucleus. Its subcellular location is the cytoplasm. The protein localises to the cytoskeleton. It is found in the spindle. Its pathway is protein modification; protein ubiquitination. Regulator of APC activity during mitotic and meiotic cell cycle. During mitotic cell cycle plays a role as both substrate and inhibitor of APC-FZR1 complex. During G1 phase, plays a role as substrate of APC-FZR1 complex E3 ligase. Then switches as an inhibitor of APC-FZR1 complex during S and G2 leading to cell-cycle commitment. As APC inhibitor, prevents the degradation of APC substrates at multiple levels: by interacting with APC and blocking access of APC substrates to the D-box co-receptor, formed by FZR1 and ANAPC10; by suppressing ubiquitin ligation and chain elongation by APC by preventing the UBE2C and UBE2S activities. Plays a role in genome integrity preservation by coordinating DNA replication with mitosis through APC inhibition in interphase to stabilize CCNA2 and GMNN in order to promote mitosis and prevent rereplication and DNA damage-induced cellular senescence. During oocyte maturation, plays a role in meiosis through inactivation of APC-FZR1 complex. Inhibits APC through RPS6KA2 interaction that increases FBXO5 affiniy for CDC20 leading to the metaphase arrest of the second meiotic division before fertilization. Controls entry into the first meiotic division through inactivation of APC-FZR1 complex. Promotes migration and osteogenic differentiation of mesenchymal stem cells. The sequence is that of F-box only protein 5 from Mus musculus (Mouse).